The sequence spans 273 residues: Tryptophan synthase alpha chain (273 aa).

Active-site proton acceptor residues include glutamate 49 and aspartate 60.

Belongs to the TrpA family. As to quaternary structure, tetramer of two alpha and two beta chains.

The enzyme catalyses (1S,2R)-1-C-(indol-3-yl)glycerol 3-phosphate + L-serine = D-glyceraldehyde 3-phosphate + L-tryptophan + H2O. It functions in the pathway amino-acid biosynthesis; L-tryptophan biosynthesis; L-tryptophan from chorismate: step 5/5. Functionally, the alpha subunit is responsible for the aldol cleavage of indoleglycerol phosphate to indole and glyceraldehyde 3-phosphate. In Halorhodospira halophila (strain DSM 244 / SL1) (Ectothiorhodospira halophila (strain DSM 244 / SL1)), this protein is Tryptophan synthase alpha chain.